Here is a 450-residue protein sequence, read N- to C-terminus: 3-phosphoshikimate 1-carboxyvinyltransferase (450 aa).

Lys28, Ser29, and Arg33 together coordinate 3-phosphoshikimate. Phosphoenolpyruvate is bound at residue Lys28. Phosphoenolpyruvate is bound by residues Gly100 and Arg128. Residues Ser173, Gln175, Asp326, and Lys353 each coordinate 3-phosphoshikimate. Residue Gln175 coordinates phosphoenolpyruvate. Asp326 acts as the Proton acceptor in catalysis. Positions 357 and 402 each coordinate phosphoenolpyruvate.

This sequence belongs to the EPSP synthase family. As to quaternary structure, monomer.

It is found in the cytoplasm. The enzyme catalyses 3-phosphoshikimate + phosphoenolpyruvate = 5-O-(1-carboxyvinyl)-3-phosphoshikimate + phosphate. The protein operates within metabolic intermediate biosynthesis; chorismate biosynthesis; chorismate from D-erythrose 4-phosphate and phosphoenolpyruvate: step 6/7. Its function is as follows. Catalyzes the transfer of the enolpyruvyl moiety of phosphoenolpyruvate (PEP) to the 5-hydroxyl of shikimate-3-phosphate (S3P) to produce enolpyruvyl shikimate-3-phosphate and inorganic phosphate. The chain is 3-phosphoshikimate 1-carboxyvinyltransferase from Brucella melitensis biotype 2 (strain ATCC 23457).